The sequence spans 244 residues: Flagellar brake protein YcgR (244 aa).

Residues 112-230 (QRRRYFRISA…ERQLQRIIFS (119 aa)) form the PilZ domain.

It belongs to the YcgR family. As to quaternary structure, monomer. Interacts with MotA in the flagellar basal bodies. In another study it was not seen to interact with MotA, but instead with FliM and FliG, also in the flagellar basal body.

The protein localises to the bacterial flagellum basal body. Acts as a flagellar brake, regulating swimming and swarming in a bis-(3'-5') cyclic diguanylic acid (c-di-GMP)-dependent manner. When bound to c-di-GMP it binds to elements of the flagellar motor (MotA and/or FliG and FliM, binding to FliM also occurs in the absence of c-di-GMP), causing the motor to slow down. Thus, increasing levels of c-di-GMP lead to decreased motility. Probably binds 1 c-di-GMP dimer per subunit. The protein is Flagellar brake protein YcgR (ycgR) of Escherichia coli (strain K12).